Here is a 369-residue protein sequence, read N- to C-terminus: Cyclic AMP receptor-like protein A (369 aa).

Residues 1-4 (MIQI) lie on the Extracellular side of the membrane. The chain crosses the membrane as a helical span at residues 5–22 (LLSTFISFIIIIVSSNDI). The Cytoplasmic portion of the chain corresponds to 23–72 (RSGENDNFNNNKMINNFLTTITTNDTIIIKETESPNDYDFSKEQIESLDK). Residues 73–93 (IVYFSSTMGIVGALFIIVSFF) form a helical membrane-spanning segment. Over 94 to 100 (LFKAART) the chain is Extracellular. Residues 101–121 (FATKMIFFLSLSDLFAAIFYL) traverse the membrane as a helical segment. Residues 122 to 146 (PYYRDSDIMCNLQGMGLVFFLSSSY) lie on the Cytoplasmic side of the membrane. The chain crosses the membrane as a helical span at residues 147 to 167 (LWTMCISISLFMVFFTTIFEL). Over 168 to 173 (NHWFKY) the chain is Extracellular. A helical transmembrane segment spans residues 174–194 (FHFICWGIPLFTAIISLIFHA). The Cytoplasmic portion of the chain corresponds to 195-212 (YGKTGSWCFISDPTSIFR). The helical transmembrane segment at 213–233 (LLYYLPLIVVFFINLVVFIAI) threads the bilayer. At 234–247 (RWKISQHSNSLVSR) the chain is on the extracellular side. Residues 248-268 (VNIIVSFYLIAFSLSQLPTII) form a helical membrane-spanning segment. Over 269–369 (NSIQNFSDPD…KLIIDDYNRV (101 aa)) the chain is Cytoplasmic.

The protein belongs to the G-protein coupled receptor 5 family.

It localises to the membrane. In terms of biological role, receptor for cAMP which may play a role in prestalk cell differentiation. May act as a negative regulator of cell growth. The chain is Cyclic AMP receptor-like protein A (crlA) from Dictyostelium discoideum (Social amoeba).